Here is a 1238-residue protein sequence, read N- to C-terminus: Cullin-associated NEDD8-dissociated protein 1 (1238 aa).

HEAT repeat units follow at residues 41-78 (TYEN…RVKD), 126-167 (LVIK…KYGS), 171-208 (GDLE…PSPD), 210-247 (LFNS…SSGY), and 251-292 (KYLP…KCQK). The tract at residues 315–354 (YSDDGEGEEDGDEEEEEMETSGDNDEEQEEEEEEEDLSDD) is disordered. 9 HEAT repeats span residues 382–419 (ELYQ…QLNK), 432–469 (QQVP…IIPG), 603–641 (EIQS…SSIN), 646–683 (SILP…VCPN), 688–725 (SLLT…NYSE), 853–890 (HENE…CSLQ), 933–966 (PFLQ…KLSM), 967–1004 (IEPN…ENKE), and 1008–1045 (QYLA…NKPN).

It belongs to the CAND family.

The protein resides in the nucleus. In terms of biological role, key assembly factor of SCF (SKP1-CUL1-F-box protein) E3 ubiquitin ligase complexes that promotes the exchange of the substrate-recognition F-box subunit in SCF complexes, thereby playing a key role in the cellular repertoire of SCF complexes. Acts as a F-box protein exchange factor. The chain is Cullin-associated NEDD8-dissociated protein 1 (cand1) from Dictyostelium discoideum (Social amoeba).